We begin with the raw amino-acid sequence, 423 residues long: 3-isopropylmalate dehydratase large subunit 1 (423 aa).

[4Fe-4S] cluster is bound by residues Cys-302, Cys-362, and Cys-365.

Belongs to the aconitase/IPM isomerase family. LeuC type 2 subfamily. In terms of assembly, heterodimer of LeuC and LeuD. The cofactor is [4Fe-4S] cluster.

The catalysed reaction is (2R,3S)-3-isopropylmalate = (2S)-2-isopropylmalate. Its pathway is amino-acid biosynthesis; L-leucine biosynthesis; L-leucine from 3-methyl-2-oxobutanoate: step 2/4. Its function is as follows. Catalyzes the isomerization between 2-isopropylmalate and 3-isopropylmalate, via the formation of 2-isopropylmaleate. The sequence is that of 3-isopropylmalate dehydratase large subunit 1 from Pyrococcus abyssi (strain GE5 / Orsay).